A 272-amino-acid polypeptide reads, in one-letter code: MEAEESEKAATEQEPLKGTEQTLDAEEEQEESEDAACGSKKRVVPGIVYLGHIPPRFRPLHVRNLLSAYGEVGRVFFQAEDRFVRRKKKAAAAAGGKKRSYSKDYTEGWVEFRDKRIAKRVAASLHNTPMGARRRSPFRYDLWNLKYLHRFTWSHLSEHLAFERQVRRQRLRAEVAQAKRETDFYLQSVERGQRFLAADGDPARPDGSWTFAQRPTEQELRAQKAARPGGRERARLVTAQDKARSNKGLLARIFGAPPPSESMEGPSLVRDS.

The residue at position 1 (M1) is an N-acetylmethionine. Residues 1 to 17 (MEAEESEKAATEQEPLK) are compositionally biased toward basic and acidic residues. Residues 1 to 38 (MEAEESEKAATEQEPLKGTEQTLDAEEEQEESEDAACG) form a disordered region. A compositionally biased stretch (acidic residues) spans 23–34 (LDAEEEQEESED). One can recognise an RRM domain in the interval 46–142 (GIVYLGHIPP…RRRSPFRYDL (97 aa)). Positions 161 to 191 (AFERQVRRQRLRAEVAQAKRETDFYLQSVER) form a coiled coil. Residues 197 to 272 (AADGDPARPD…MEGPSLVRDS (76 aa)) form a disordered region.

Belongs to the ESF2/ABP1 family. In terms of assembly, interacts with ESF1/ABTAP. Interacts with IGHMBP2.

Its subcellular location is the nucleus. The protein resides in the nucleolus. Its function is as follows. Could be a novel TATA-binding protein (TBP) which can function as a basal transcription activator. Can act as a regulator of basal transcription for class II genes. The polypeptide is Activator of basal transcription 1 (ABT1) (Pongo abelii (Sumatran orangutan)).